We begin with the raw amino-acid sequence, 283 residues long: UPF0276 protein Nmul_A2550 (283 aa).

Belongs to the UPF0276 family.

This chain is UPF0276 protein Nmul_A2550, found in Nitrosospira multiformis (strain ATCC 25196 / NCIMB 11849 / C 71).